We begin with the raw amino-acid sequence, 218 residues long: Glutathione S-transferase (218 aa).

The GST N-terminal domain maps to 2-88 (PVTLGYWDIR…YIARKHDLCG (87 aa)). Glutathione is bound by residues 7-8 (YW), 46-50 (WLNEK), 59-60 (NL), and 72-73 (QS). A GST C-terminal domain is found at 90–208 (TEEERIQLDI…KSSRFSCKQI (119 aa)). Residue Y116 participates in substrate binding.

This sequence belongs to the GST superfamily. Mu family. Homodimer.

It localises to the cytoplasm. The catalysed reaction is RX + glutathione = an S-substituted glutathione + a halide anion + H(+). Conjugation of reduced glutathione to a wide number of exogenous and endogenous hydrophobic electrophiles. In Mesocricetus auratus (Golden hamster), this protein is Glutathione S-transferase.